We begin with the raw amino-acid sequence, 465 residues long: Mothers against decapentaplegic homolog 5 (465 aa).

Threonine 2 is subject to N-acetylthreonine. One can recognise an MH1 domain in the interval proline 13–proline 137. Cysteine 65, cysteine 110, cysteine 122, and histidine 127 together coordinate Zn(2+). Positions asparagine 163–threonine 243 are disordered. Residues glutamine 169–serine 182 are compositionally biased toward polar residues. Residues proline 186 to proline 197 show a composition bias toward pro residues. Residues alanine 198–proline 214 show a composition bias toward low complexity. Residues glycine 234 to threonine 243 are compositionally biased toward polar residues. The MH2 domain occupies tryptophan 271–serine 465. Phosphoserine occurs at positions 463 and 465.

This sequence belongs to the dwarfin/SMAD family. In terms of assembly, homodimer. Forms trimers with the co-SMAD SMAD4. Interacts with PEBP2-alpha subunit and SMURF1. Interacts with SUV39H1 and SUV39H2. Interacts (via MH2 domain) with LEMD3. Interacts with WWP1. Interacts with TMEM119. Interacts with ZNF8. Interacts with RANBP3L. Interacts with HK1. Interacts with HGS; this interaction attenuates BMP signaling. Post-translationally, phosphorylated on serine by BMP (bone morphogenetic proteins) type 1 receptor kinase. Ubiquitin-mediated proteolysis by SMAD-specific E3 ubiquitin ligase SMURF1.

It localises to the cytoplasm. Its subcellular location is the nucleus. The protein resides in the mitochondrion. In terms of biological role, transcriptional regulator that plays a role in various cellular processes including embryonic development, cell differentiation, angiogenesis and tissue homeostasis. Upon BMP ligand binding to their receptors at the cell surface, is phosphorylated by activated type I BMP receptors (BMPRIs) and associates with SMAD4 to form a heteromeric complex which translocates into the nucleus acting as transcription factor. In turn, the hetero-trimeric complex recognizes cis-regulatory elements containing Smad Binding Elements (SBEs) to modulate the outcome of the signaling network. Non-phosphorylated SMAD5 has a cytoplasmic role in energy metabolism regulation by promoting mitochondrial respiration and glycolysis in response to cytoplasmic pH changes. Mechanistically, interacts with hexokinase 1/HK1 and thereby accelerates glycolysis. The polypeptide is Mothers against decapentaplegic homolog 5 (Smad5) (Rattus norvegicus (Rat)).